The chain runs to 227 residues: Cytochrome c oxidase subunit 2 (227 aa).

At 1–14 (MAHPVQLGLQDATS) the chain is on the mitochondrial intermembrane side. Residues 15–45 (PVMEELITFHDYALMTISLISFLVLYALFST) form a helical membrane-spanning segment. Residues 46-59 (LTTKLTNTNITDAQ) lie on the Mitochondrial matrix side of the membrane. The chain crosses the membrane as a helical span at residues 60–87 (EMETTWTILPAVILILIALPSLRILYLT). At 88 to 227 (DEINNPSFTI…IFEMGPVFTL (140 aa)) the chain is on the mitochondrial intermembrane side. Cu cation-binding residues include H161, C196, E198, C200, H204, and M207. E198 is a Mg(2+) binding site.

It belongs to the cytochrome c oxidase subunit 2 family. Component of the cytochrome c oxidase (complex IV, CIV), a multisubunit enzyme composed of 14 subunits. The complex is composed of a catalytic core of 3 subunits MT-CO1, MT-CO2 and MT-CO3, encoded in the mitochondrial DNA, and 11 supernumerary subunits COX4I, COX5A, COX5B, COX6A, COX6B, COX6C, COX7A, COX7B, COX7C, COX8 and NDUFA4, which are encoded in the nuclear genome. The complex exists as a monomer or a dimer and forms supercomplexes (SCs) in the inner mitochondrial membrane with NADH-ubiquinone oxidoreductase (complex I, CI) and ubiquinol-cytochrome c oxidoreductase (cytochrome b-c1 complex, complex III, CIII), resulting in different assemblies (supercomplex SCI(1)III(2)IV(1) and megacomplex MCI(2)III(2)IV(2)). Found in a complex with TMEM177, COA6, COX18, COX20, SCO1 and SCO2. Interacts with TMEM177 in a COX20-dependent manner. Interacts with COX20. Interacts with COX16. Cu cation is required as a cofactor.

It localises to the mitochondrion inner membrane. It catalyses the reaction 4 Fe(II)-[cytochrome c] + O2 + 8 H(+)(in) = 4 Fe(III)-[cytochrome c] + 2 H2O + 4 H(+)(out). Component of the cytochrome c oxidase, the last enzyme in the mitochondrial electron transport chain which drives oxidative phosphorylation. The respiratory chain contains 3 multisubunit complexes succinate dehydrogenase (complex II, CII), ubiquinol-cytochrome c oxidoreductase (cytochrome b-c1 complex, complex III, CIII) and cytochrome c oxidase (complex IV, CIV), that cooperate to transfer electrons derived from NADH and succinate to molecular oxygen, creating an electrochemical gradient over the inner membrane that drives transmembrane transport and the ATP synthase. Cytochrome c oxidase is the component of the respiratory chain that catalyzes the reduction of oxygen to water. Electrons originating from reduced cytochrome c in the intermembrane space (IMS) are transferred via the dinuclear copper A center (CU(A)) of subunit 2 and heme A of subunit 1 to the active site in subunit 1, a binuclear center (BNC) formed by heme A3 and copper B (CU(B)). The BNC reduces molecular oxygen to 2 water molecules using 4 electrons from cytochrome c in the IMS and 4 protons from the mitochondrial matrix. The protein is Cytochrome c oxidase subunit 2 (MT-CO2) of Chlorocebus aethiops (Green monkey).